We begin with the raw amino-acid sequence, 119 residues long: Large ribosomal subunit protein bL20 (119 aa).

The protein belongs to the bacterial ribosomal protein bL20 family.

Its function is as follows. Binds directly to 23S ribosomal RNA and is necessary for the in vitro assembly process of the 50S ribosomal subunit. It is not involved in the protein synthesizing functions of that subunit. In Azoarcus sp. (strain BH72), this protein is Large ribosomal subunit protein bL20.